The primary structure comprises 954 residues: Centrosomal protein of 112 kDa (954 aa).

The stretch at 276–954 (QKHDAEVQKI…EELTTYQSRR (679 aa)) forms a coiled coil.

It is found in the cytoplasm. It localises to the cytoskeleton. Its subcellular location is the microtubule organizing center. The protein resides in the centrosome. The polypeptide is Centrosomal protein of 112 kDa (Cep112) (Mus musculus (Mouse)).